We begin with the raw amino-acid sequence, 648 residues long: Threonine--tRNA ligase (648 aa).

Residues 1-63 (MAQISLTFPD…TQDAAIAIHT (63 aa)) enclose the TGS domain. Residues 247-544 (DHRKLGREMN…LIEEHAGKLP (298 aa)) are catalytic. 3 residues coordinate Zn(2+): Cys344, His395, and His521.

Belongs to the class-II aminoacyl-tRNA synthetase family. As to quaternary structure, homodimer. It depends on Zn(2+) as a cofactor.

It localises to the cytoplasm. The enzyme catalyses tRNA(Thr) + L-threonine + ATP = L-threonyl-tRNA(Thr) + AMP + diphosphate + H(+). Catalyzes the attachment of threonine to tRNA(Thr) in a two-step reaction: L-threonine is first activated by ATP to form Thr-AMP and then transferred to the acceptor end of tRNA(Thr). Also edits incorrectly charged L-seryl-tRNA(Thr). This chain is Threonine--tRNA ligase, found in Ruegeria sp. (strain TM1040) (Silicibacter sp.).